The primary structure comprises 395 residues: Tryptophan--tRNA ligase (395 aa).

ATP contacts are provided by residues 8-10 and 16-17; these read RPT and GH. Residues 9–17 carry the 'HIGH' region motif; sequence PTGKLHLGH. The segment at 117–179 is insert; it reads RLTDLEKEFK…EIEPEILKRL (63 aa). Asp204 is an L-tryptophan binding site. Residues 216-218, Ile254, and 261-265 contribute to the ATP site; these read GED and KMSKS. A 'KMSKS' region motif is present at residues 261-265; sequence KMSKS.

It belongs to the class-I aminoacyl-tRNA synthetase family. In terms of assembly, homodimer.

The protein resides in the cytoplasm. It carries out the reaction tRNA(Trp) + L-tryptophan + ATP = L-tryptophyl-tRNA(Trp) + AMP + diphosphate + H(+). Catalyzes the attachment of tryptophan to tRNA(Trp). The protein is Tryptophan--tRNA ligase of Aquifex aeolicus (strain VF5).